The chain runs to 922 residues: Dual serine/threonine and tyrosine protein kinase (922 aa).

In terms of domain architecture, Protein kinase spans 645–899; that stretch reads PKLGRELGRG…PLLGIVEPSL (255 aa). ATP-binding positions include 651–659 and Lys-674; that span reads LGRGQYGVV. Asp-770 acts as the Proton acceptor in catalysis.

Belongs to the protein kinase superfamily. Ser/Thr protein kinase family.

The protein localises to the cytoplasm. Its subcellular location is the cell membrane. The protein resides in the apical cell membrane. It localises to the basolateral cell membrane. It is found in the cell junction. The enzyme catalyses L-seryl-[protein] + ATP = O-phospho-L-seryl-[protein] + ADP + H(+). It carries out the reaction L-threonyl-[protein] + ATP = O-phospho-L-threonyl-[protein] + ADP + H(+). It catalyses the reaction L-tyrosyl-[protein] + ATP = O-phospho-L-tyrosyl-[protein] + ADP + H(+). Functionally, may act as a positive regulator of ERK phosphorylation downstream of fibroblast growth factor-receptor activation. May induce both caspase-dependent apoptosis and caspase-independent cell death. May play a role in the embryonic development. In Tetraodon nigroviridis (Spotted green pufferfish), this protein is Dual serine/threonine and tyrosine protein kinase.